We begin with the raw amino-acid sequence, 285 residues long: (3S)-malyl-CoA thioesterase (285 aa).

2 residues coordinate substrate: Arg-70 and Glu-122. Mg(2+) contacts are provided by Glu-122 and Asp-148.

Belongs to the HpcH/HpaI aldolase family. Homodimer or homotrimer. Mg(2+) is required as a cofactor.

It catalyses the reaction (S)-malyl-CoA + H2O = (S)-malate + CoA + H(+). In terms of biological role, catalyzes the hydrolysis of (3S)-malyl-CoA to (3S)-malate and free CoA. Inactive towards beta-methylmalyl-CoA and other CoA esters. This chain is (3S)-malyl-CoA thioesterase, found in Cereibacter sphaeroides (strain KD131 / KCTC 12085) (Rhodobacter sphaeroides).